The primary structure comprises 634 residues: MPSSVNRTSRTEPAGHHREFPLSLAAIDELVAEEEAEDARVLHLTANETVLSPRARAVLASPLTSRYLLEHLDMRGPSPARLGNLLLRGLDRIGTIEESATEVCRRLFGARYAEFRCLSGLHAMQTTFAALSRPGDTVMRVATKDGGHFLTELICRSFGRRSCTYVFDDTMTIDLERTREVVEKERPSLLFVDAMNYLFPFPIAELKAIAGDVPLVFDASHTLGLIAGGRFQDPLREGADLLQANTHKTFFGPQKGIILGNDRSLMEELGYTLSTGMVSSQHTASTVALLIALHEMWYDGREYAAQVIDNARRLAGALRDRGVPVVAEERGFTANHMFFVDTRPLGSGPAVIQRLVRAGVSANRAVAFNHLDTIRFGVQEITRRGYDHDDLDEAADLVAAVLLERQEPERIRPRVAELVGRRRTVRYTGDPASAAGPPARERYAPPTAPAGHPARPRWIGVRLTPLPEPVTEAECAGAQRLGRLAGAFPHQIDSSGNVSFTSTDGRLFVTGSGTYIKDLAPGDFVELTGAEGWTLHCRGDGPPSAEAYLHHLLRERVGARYVVHNHCIPGRALETSGALVIPPKEYGSVALAEAVADACQDSQVMYVRRHGLVFWAHSYDECLALIEDVRRITG.

Pyridoxal 5'-phosphate-binding residues include Tyr-67, His-221, and His-247. Lys-248 carries the post-translational modification N6-(pyridoxal phosphate)lysine. Arg-375 contributes to the pyridoxal 5'-phosphate binding site. Residues 428–456 (TGDPASAAGPPARERYAPPTAPAGHPARP) are disordered.

Belongs to the SHMT family. Requires pyridoxal 5'-phosphate as cofactor.

It catalyses the reaction fluoroacetaldehyde + L-threonine = 4-fluoro-L-threonine + acetaldehyde. In terms of biological role, transaldolase that catalyzes the final step in 4-fluorothreonine biosynthesis. Mediates a L-threonine/fluoroaceldehyde to 4-fluoro-L-threonine/acetaldehyde crossover reaction. Can also convert chloroacetaldehyde into 4-chloro-L-threonine. Does not use glycine as a substrate. This Streptantibioticus cattleyicolor (Streptomyces cattleya) protein is Fluorothreonine transaldolase.